The primary structure comprises 352 residues: DNA integrity scanning protein DisA (352 aa).

In terms of domain architecture, DAC spans 3–143 (DERIVLALKS…FKYSLSEVSV (141 aa)). ATP contacts are provided by residues glycine 70, leucine 88, and 101-105 (IRHRT).

The protein belongs to the DisA family. Homooctamer. It depends on Mg(2+) as a cofactor.

The enzyme catalyses 2 ATP = 3',3'-c-di-AMP + 2 diphosphate. Its function is as follows. Participates in a DNA-damage check-point that is active prior to asymmetric division when DNA is damaged. DisA forms globular foci that rapidly scan along the chromosomes during sporulation, searching for lesions. When a lesion is present, DisA pauses at the lesion site. This triggers a cellular response that culminates in a temporary block in sporulation initiation. Functionally, also has diadenylate cyclase activity, catalyzing the condensation of 2 ATP molecules into cyclic di-AMP (c-di-AMP). c-di-AMP acts as a signaling molecule that couples DNA integrity with progression of sporulation. The rise in c-di-AMP level generated by DisA while scanning the chromosome, operates as a positive signal that advances sporulation; upon encountering a lesion, the DisA focus arrests at the damaged site and halts c-di-AMP synthesis. The sequence is that of DNA integrity scanning protein DisA from Carboxydothermus hydrogenoformans (strain ATCC BAA-161 / DSM 6008 / Z-2901).